Here is a 449-residue protein sequence, read N- to C-terminus: Gamma conglutin 1 (449 aa).

An N-terminal signal peptide occupies residues 1–33 (MARNMAHILHILVISLSYSFLFVSSSSQDSQSL). Residues 60 to 429 (HWANIHKRTP…DLERSRVGFN (370 aa)) form the Peptidase A1 domain. 5 disulfide bridges follow: cysteine 88/cysteine 178, cysteine 102/cysteine 115, cysteine 107/cysteine 133, cysteine 118/cysteine 128, and cysteine 350/cysteine 391. An N-linked (GlcNAc...) asparagine glycan is attached at asparagine 130.

This sequence belongs to the peptidase A1 family. In terms of assembly, two-subunit monomeric unit made of alpha and beta subunits coupled by disulfide bonds (at pH 4.5 and under non-reducing conditions). Can also form oligomers including dimer, tetramer and cyclic hexamer (trimer of dimers) (at pH &gt; 5.5). Component of globulins complexes which accumulate in seeds. Interacts with flavonoids (e.g. apigenin glucosides) present in globulins complexes. Forms a static complex with vitexin. In terms of processing, undergoes very complex post-translational maturation; the proteolytic processing leading to the formation of two alpha and beta subunits is incomplete, leaving a certain amount of the protein in an uncut form. Post-translationally, glycosylated on alpha chain. In terms of tissue distribution, expressed in developing cotyledons and in the embryonic axis of germinating seeds. Accumulates in seeds, especially in the protein bodies of developing cotyledonary cells (at protein level). Also detected, at low levels, in plumules and radicles.

It localises to the secreted. It is found in the extracellular space. Its function is as follows. Sulfur-rich seed storage protein that remains undegraded at germination. This Lupinus angustifolius (Narrow-leaved blue lupine) protein is Gamma conglutin 1.